The chain runs to 552 residues: 2,3-bisphosphoglycerate-independent phosphoglycerate mutase (552 aa).

Over residues 1-25 the composition is skewed to polar residues; sequence MTNTQQQSESIDDNQAQLSKQQNSD. The tract at residues 1 to 30 is disordered; that stretch reads MTNTQQQSESIDDNQAQLSKQQNSDNNKKV. Mn(2+) contacts are provided by D38 and S88. S88 (phosphoserine intermediate) is an active-site residue. Substrate is bound by residues H149, 179–180, R217, R223, 293–296, and K373; these read RD and RADR. D440, H444, D481, H482, and H500 together coordinate Mn(2+).

This sequence belongs to the BPG-independent phosphoglycerate mutase family. As to quaternary structure, monomer. It depends on Mn(2+) as a cofactor.

It catalyses the reaction (2R)-2-phosphoglycerate = (2R)-3-phosphoglycerate. The protein operates within carbohydrate degradation; glycolysis; pyruvate from D-glyceraldehyde 3-phosphate: step 3/5. Catalyzes the interconversion of 2-phosphoglycerate and 3-phosphoglycerate. This is 2,3-bisphosphoglycerate-independent phosphoglycerate mutase from Psychrobacter arcticus (strain DSM 17307 / VKM B-2377 / 273-4).